A 597-amino-acid chain; its full sequence is Elongation factor 4 (597 aa).

The tr-type G domain occupies 2–184 (KNIRNFSIIA…TVVQKIPAPK (183 aa)). GTP contacts are provided by residues 14–19 (DHGKST) and 131–134 (NKID).

The protein belongs to the TRAFAC class translation factor GTPase superfamily. Classic translation factor GTPase family. LepA subfamily.

The protein localises to the cell inner membrane. The enzyme catalyses GTP + H2O = GDP + phosphate + H(+). In terms of biological role, required for accurate and efficient protein synthesis under certain stress conditions. May act as a fidelity factor of the translation reaction, by catalyzing a one-codon backward translocation of tRNAs on improperly translocated ribosomes. Back-translocation proceeds from a post-translocation (POST) complex to a pre-translocation (PRE) complex, thus giving elongation factor G a second chance to translocate the tRNAs correctly. Binds to ribosomes in a GTP-dependent manner. The sequence is that of Elongation factor 4 from Laribacter hongkongensis (strain HLHK9).